Reading from the N-terminus, the 79-residue chain is Acyl carrier protein (79 aa).

The region spanning 2-77 (SDIAERVKKI…DAVKFLEKNS (76 aa)) is the Carrier domain. S37 is subject to O-(pantetheine 4'-phosphoryl)serine.

This sequence belongs to the acyl carrier protein (ACP) family. Post-translationally, 4'-phosphopantetheine is transferred from CoA to a specific serine of apo-ACP by AcpS. This modification is essential for activity because fatty acids are bound in thioester linkage to the sulfhydryl of the prosthetic group.

The protein resides in the cytoplasm. Its pathway is lipid metabolism; fatty acid biosynthesis. In terms of biological role, carrier of the growing fatty acid chain in fatty acid biosynthesis. This is Acyl carrier protein from Methylobacterium radiotolerans (strain ATCC 27329 / DSM 1819 / JCM 2831 / NBRC 15690 / NCIMB 10815 / 0-1).